Reading from the N-terminus, the 208-residue chain is Large ribosomal subunit protein bL25 (208 aa).

The interval 1–21 (MSNEFSLNAEKRDVQGKGASR) is disordered.

The protein belongs to the bacterial ribosomal protein bL25 family. CTC subfamily. In terms of assembly, part of the 50S ribosomal subunit; part of the 5S rRNA/L5/L18/L25 subcomplex. Contacts the 5S rRNA. Binds to the 5S rRNA independently of L5 and L18.

In terms of biological role, this is one of the proteins that binds to the 5S RNA in the ribosome where it forms part of the central protuberance. In Hahella chejuensis (strain KCTC 2396), this protein is Large ribosomal subunit protein bL25.